Here is a 183-residue protein sequence, read N- to C-terminus: Ribulose bisphosphate carboxylase small subunit, chloroplastic (183 aa).

Residues 1 to 58 constitute a chloroplast transit peptide; it reads MASSMLSTAAVACINRASPAQASMVAPFTGLKSTSAFPTTRKTTTDITSIASNGGRVQ.

This sequence belongs to the RuBisCO small chain family. Heterohexadecamer of 8 large and 8 small subunits.

The protein resides in the plastid. Its subcellular location is the chloroplast. Its function is as follows. RuBisCO catalyzes two reactions: the carboxylation of D-ribulose 1,5-bisphosphate, the primary event in carbon dioxide fixation, as well as the oxidative fragmentation of the pentose substrate. Both reactions occur simultaneously and in competition at the same active site. Although the small subunit is not catalytic it is essential for maximal activity. The sequence is that of Ribulose bisphosphate carboxylase small subunit, chloroplastic from Hevea brasiliensis (Para rubber tree).